Here is a 369-residue protein sequence, read N- to C-terminus: Putative FAD-dependent oxidoreductase LodB (369 aa).

FAD contacts are provided by residues glycine 10–alanine 14 and arginine 103.

FAD is required as a cofactor.

It is found in the cytoplasm. Its function is as follows. Is required for lysine-epsilon oxidase (LOD) activity in M.mediterranea. May be involved in the generation of the quinonic cofactor of LodA, leading to the active form of LodA containing a tyrosine-derived quinone cofactor. The chain is Putative FAD-dependent oxidoreductase LodB (lodB) from Marinomonas mediterranea (strain ATCC 700492 / JCM 21426 / NBRC 103028 / MMB-1).